Here is a 346-residue protein sequence, read N- to C-terminus: Holliday junction branch migration complex subunit RuvB (346 aa).

The interval 2-183 (TDDRIIGAGA…FGIVQRLEFY (182 aa)) is large ATPase domain (RuvB-L). ATP-binding positions include Ile-22, Arg-23, Gly-64, Lys-67, Thr-68, Thr-69, 130-132 (EDF), Arg-173, Tyr-183, and Arg-220. A Mg(2+)-binding site is contributed by Thr-68. The tract at residues 184–254 (SVEELTRIVR…VAQAAMKMLK (71 aa)) is small ATPAse domain (RuvB-S). The segment at 257-346 (PEGFDELDRR…DLFAEVPDVG (90 aa)) is head domain (RuvB-H). Arg-293, Arg-312, and Arg-317 together coordinate DNA.

It belongs to the RuvB family. Homohexamer. Forms an RuvA(8)-RuvB(12)-Holliday junction (HJ) complex. HJ DNA is sandwiched between 2 RuvA tetramers; dsDNA enters through RuvA and exits via RuvB. An RuvB hexamer assembles on each DNA strand where it exits the tetramer. Each RuvB hexamer is contacted by two RuvA subunits (via domain III) on 2 adjacent RuvB subunits; this complex drives branch migration. In the full resolvosome a probable DNA-RuvA(4)-RuvB(12)-RuvC(2) complex forms which resolves the HJ.

The protein resides in the cytoplasm. It catalyses the reaction ATP + H2O = ADP + phosphate + H(+). Its function is as follows. The RuvA-RuvB-RuvC complex processes Holliday junction (HJ) DNA during genetic recombination and DNA repair, while the RuvA-RuvB complex plays an important role in the rescue of blocked DNA replication forks via replication fork reversal (RFR). RuvA specifically binds to HJ cruciform DNA, conferring on it an open structure. The RuvB hexamer acts as an ATP-dependent pump, pulling dsDNA into and through the RuvAB complex. RuvB forms 2 homohexamers on either side of HJ DNA bound by 1 or 2 RuvA tetramers; 4 subunits per hexamer contact DNA at a time. Coordinated motions by a converter formed by DNA-disengaged RuvB subunits stimulates ATP hydrolysis and nucleotide exchange. Immobilization of the converter enables RuvB to convert the ATP-contained energy into a lever motion, pulling 2 nucleotides of DNA out of the RuvA tetramer per ATP hydrolyzed, thus driving DNA branch migration. The RuvB motors rotate together with the DNA substrate, which together with the progressing nucleotide cycle form the mechanistic basis for DNA recombination by continuous HJ branch migration. Branch migration allows RuvC to scan DNA until it finds its consensus sequence, where it cleaves and resolves cruciform DNA. This Stenotrophomonas maltophilia (strain K279a) protein is Holliday junction branch migration complex subunit RuvB.